The following is a 443-amino-acid chain: Xaa-Pro dipeptidase (443 aa).

Residues D246, D257, H339, E384, and E423 each coordinate Mn(2+).

The protein belongs to the peptidase M24B family. Bacterial-type prolidase subfamily. Mn(2+) serves as cofactor.

It carries out the reaction Xaa-L-Pro dipeptide + H2O = an L-alpha-amino acid + L-proline. Its function is as follows. Splits dipeptides with a prolyl residue in the C-terminal position. The sequence is that of Xaa-Pro dipeptidase from Salmonella arizonae (strain ATCC BAA-731 / CDC346-86 / RSK2980).